We begin with the raw amino-acid sequence, 180 residues long: Adenine phosphoribosyltransferase (180 aa).

Residue Ser2 is modified to N-acetylserine. A phosphoserine mark is found at Ser4, Ser15, and Ser30. Tyr60 bears the Phosphotyrosine mark. Ser66 carries the phosphoserine modification. An N6-acetyllysine modification is found at Lys114. Thr135 is subject to Phosphothreonine.

This sequence belongs to the purine/pyrimidine phosphoribosyltransferase family. In terms of assembly, homodimer.

It is found in the cytoplasm. It carries out the reaction AMP + diphosphate = 5-phospho-alpha-D-ribose 1-diphosphate + adenine. It functions in the pathway purine metabolism; AMP biosynthesis via salvage pathway; AMP from adenine: step 1/1. Functionally, catalyzes a salvage reaction resulting in the formation of AMP, that is energically less costly than de novo synthesis. This Mus pahari (Gairdner's shrew-mouse) protein is Adenine phosphoribosyltransferase.